The sequence spans 877 residues: MKLTLLIGILLIGIGVVLNTRQQWVTVFYGVPVWKNSSVQAFCMTPTTRLWATTNSIPDDHDYTEVPLNITEPFEAWADRNPLVAQAGSNIHLLFEQTLKPCVKLSPLCIKMSCVELNSSEPTTTPKSTTASTTNITASTTTLPCVQNKTSTVLESCNETIIEKELNEEPASNCTFAMAGYVRDQKKKYSVVWNDAEIMCKKGNNSNRECYMIHCNDSVIKEACDKTYWDELRLRYCAPAGFALLKCNDYDYAGFKTNCSNVSVVHCTNLINTTVTTGLLLNGSYSENRTQIWQKHRVSNDSVLVLFNKHYNLTVTCKRPGNKTVLPVTIMAGLVFHSQRYNTRLRQAWCHFQGNWRGAWKEVKNEIVKLPKDRYQGTNDTEEIYLQRLFGDPEAANLWFNCQGEFFYCKMDWFLNYLNNRTVDPDHNPCNGTKGKGKAPGPCAQRTYVACHIRSVINDWYTLSRKTYAPPREGHLQCTSTVTGMSVELNYNSKNRTNVTLSPQIETIWAAELGRYKLVEITPIGFAPTEVRRYTGGHDRTKRVPFVLGFLGFLGAAGTAMGAAATALTVQSQHLLAGILQQQKNLLAAVEAQQQMLKLTIWGVKNLNARVTALEKYLEDQARLNAWGCAWKQVCHTTVPWQWNNRTPDWNNMTWLEWERQISYLEGNITTQLEEARAQEEKNLDAYQKLSSWSDFWSWFDFSKWLNILKIGFLDVLGIIGLRLLYTVYSCIARVRQGYSPLSPQIHIHPWKGQPDNAEGPGEGGDKRKNSSEPWQKESGTAEWKSNWCKRLTNWCSISSIWLYNSCLTLLVHLRSAFQYIQYGLGELKAAAQEAVVALARLAQNAGYQIWLACRSAYRAIINSPRRVRQGLEGILN.

The signal sequence occupies residues methionine 1–asparagine 19. Residues threonine 20–asparagine 707 are Extracellular-facing. N-linked (GlcNAc...) asparagine; by host glycosylation is found at asparagine 36, asparagine 69, asparagine 118, asparagine 135, asparagine 148, asparagine 158, asparagine 173, asparagine 204, asparagine 216, asparagine 258, asparagine 261, asparagine 272, asparagine 282, asparagine 288, asparagine 300, asparagine 312, asparagine 322, asparagine 379, asparagine 420, asparagine 431, asparagine 495, and asparagine 498. Intrachain disulfides connect cysteine 102-cysteine 224, cysteine 109-cysteine 215, cysteine 114-cysteine 174, cysteine 237-cysteine 267, and cysteine 247-cysteine 259. The segment at cysteine 114–asparagine 173 is V1. The segment at cysteine 174–cysteine 215 is V2. Positions cysteine 317–tryptophan 349 are V3. Cysteine 317 and cysteine 350 form a disulfide bridge. Cystine bridges form between cysteine 402–cysteine 478 and cysteine 409–cysteine 451. Positions cysteine 409–cysteine 451 are V4. Residues lysine 494–leucine 501 are V5. The tract at residues valine 544 to alanine 564 is fusion peptide. Residues leucine 607–arginine 623 are immunosuppression. N-linked (GlcNAc...) asparagine; by host glycosylation is found at asparagine 652 and asparagine 668. Positions asparagine 668–serine 692 form a coiled coil. Residues lysine 689–lysine 710 form an MPER; binding to GalCer region. The chain crosses the membrane as a helical span at residues isoleucine 708–valine 728. Over tyrosine 729 to asparagine 877 the chain is Cytoplasmic. The short motif at tyrosine 739–leucine 742 is the YXXL motif; contains endocytosis signal element. The disordered stretch occupies residues tryptophan 751–serine 779.

The mature envelope protein (Env) consists of a homotrimer of non-covalently associated gp120-gp41 heterodimers. The resulting complex protrudes from the virus surface as a spike. Interacts with host CD4 and CCR5. Gp120 also interacts with the C-type lectins CD209/DC-SIGN and CLEC4M/DC-SIGNR (collectively referred to as DC-SIGN(R)). In terms of assembly, the mature envelope protein (Env) consists of a homotrimer of non-covalently associated gp120-gp41 heterodimers. The resulting complex protrudes from the virus surface as a spike. In terms of processing, specific enzymatic cleavages in vivo yield mature proteins. Envelope glycoproteins are synthesized as an inactive precursor that is heavily N-glycosylated and processed likely by host cell furin in the Golgi to yield the mature SU and TM proteins. The cleavage site between SU and TM requires the minimal sequence [KR]-X-[KR]-R.

The protein localises to the virion membrane. The protein resides in the host cell membrane. It is found in the host endosome membrane. The surface protein gp120 (SU) attaches the virus to the host lymphoid cell by binding to the primary receptor CD4. This interaction induces a structural rearrangement creating a high affinity binding site for a chemokine coreceptor like CCR5. This peculiar 2 stage receptor-interaction strategy allows gp120 to maintain the highly conserved coreceptor-binding site in a cryptic conformation, protected from neutralizing antibodies. These changes are transmitted to the transmembrane protein gp41 and are thought to activate its fusogenic potential by unmasking its fusion peptide. Functionally, surface protein gp120 (SU) may target the virus to gut-associated lymphoid tissue (GALT) by binding host ITGA4/ITGB7 (alpha-4/beta-7 integrins), a complex that mediates T-cell migration to the GALT. Interaction between gp120 and ITGA4/ITGB7 would allow the virus to enter GALT early in the infection, infecting and killing most of GALT's resting CD4+ T-cells. This T-cell depletion is believed to be the major insult to the host immune system leading to AIDS. Its function is as follows. The surface protein gp120 is a ligand for CD209/DC-SIGN and CLEC4M/DC-SIGNR, which are respectively found on dendritic cells (DCs), and on endothelial cells of liver sinusoids and lymph node sinuses. These interactions allow capture of viral particles at mucosal surfaces by these cells and subsequent transmission to permissive cells. DCs are professional antigen presenting cells, critical for host immunity by inducing specific immune responses against a broad variety of pathogens. They act as sentinels in various tissues where they take up antigen, process it, and present it to T-cells following migration to lymphoid organs. SIV subverts the migration properties of dendritic cells to gain access to CD4+ T-cells in lymph nodes. Virus transmission to permissive T-cells occurs either in trans (without DCs infection, through viral capture and transmission), or in cis (following DCs productive infection, through the usual CD4-gp120 interaction), thereby inducing a robust infection. In trans infection, bound virions remain infectious over days and it is proposed that they are not degraded, but protected in non-lysosomal acidic organelles within the DCs close to the cell membrane thus contributing to the viral infectious potential during DCs' migration from the periphery to the lymphoid tissues. On arrival at lymphoid tissues, intact virions recycle back to DCs' cell surface allowing virus transmission to CD4+ T-cells. Virion capture also seems to lead to MHC-II-restricted viral antigen presentation, and probably to the activation of SIV-specific CD4+ cells. In terms of biological role, the transmembrane protein gp41 (TM) acts as a class I viral fusion protein. Under the current model, the protein has at least 3 conformational states: pre-fusion native state, pre-hairpin intermediate state, and post-fusion hairpin state. During fusion of viral and target intracellular membranes, the coiled coil regions (heptad repeats) assume a trimer-of-hairpins structure, positioning the fusion peptide in close proximity to the C-terminal region of the ectodomain. The formation of this structure appears to drive apposition and subsequent fusion of viral and target cell membranes. Complete fusion occurs in host cell endosomes. The virus undergoes clathrin-dependent internalization long before endosomal fusion, thus minimizing the surface exposure of conserved viral epitopes during fusion and reducing the efficacy of inhibitors targeting these epitopes. Membranes fusion leads to delivery of the nucleocapsid into the cytoplasm. The envelope glycoprotein gp160 precursor down-modulates cell surface CD4 antigen by interacting with it in the endoplasmic reticulum and blocking its transport to the cell surface. Functionally, the gp120-gp41 heterodimer allows rapid transcytosis of the virus through CD4 negative cells such as simple epithelial monolayers of the intestinal, rectal and endocervical epithelial barriers. Both gp120 and gp41 specifically recognize glycosphingolipids galactosyl-ceramide (GalCer) or 3' sulfo-galactosyl-ceramide (GalS) present in the lipid rafts structures of epithelial cells. Binding to these alternative receptors allows the rapid transcytosis of the virus through the epithelial cells. This transcytotic vesicle-mediated transport of virions from the apical side to the basolateral side of the epithelial cells does not involve infection of the cells themselves. The polypeptide is Envelope glycoprotein gp160 (env) (Cercopithecidae (Old World monkeys)).